The sequence spans 347 residues: Protein RecA (347 aa).

Residue Gly65–Thr72 participates in ATP binding.

Belongs to the RecA family.

Its subcellular location is the cytoplasm. Can catalyze the hydrolysis of ATP in the presence of single-stranded DNA, the ATP-dependent uptake of single-stranded DNA by duplex DNA, and the ATP-dependent hybridization of homologous single-stranded DNAs. It interacts with LexA causing its activation and leading to its autocatalytic cleavage. In Marinobacter nauticus (strain ATCC 700491 / DSM 11845 / VT8) (Marinobacter aquaeolei), this protein is Protein RecA.